The sequence spans 373 residues: Peptide chain release factor 2 (373 aa).

An N5-methylglutamine modification is found at Gln252.

This sequence belongs to the prokaryotic/mitochondrial release factor family. Post-translationally, methylated by PrmC. Methylation increases the termination efficiency of RF2.

It localises to the cytoplasm. Its function is as follows. Peptide chain release factor 2 directs the termination of translation in response to the peptide chain termination codons UGA and UAA. The protein is Peptide chain release factor 2 of Staphylococcus saprophyticus subsp. saprophyticus (strain ATCC 15305 / DSM 20229 / NCIMB 8711 / NCTC 7292 / S-41).